Reading from the N-terminus, the 274-residue chain is NADPH-dependent 7-cyano-7-deazaguanine reductase (274 aa).

Residue Val-80 to Ser-82 participates in substrate binding. Ser-82 to Lys-83 is an NADPH binding site. The active-site Thioimide intermediate is Cys-181. Asp-188 functions as the Proton donor in the catalytic mechanism. Substrate is bound at residue His-220–Glu-221. Arg-249–Gly-250 is an NADPH binding site.

This sequence belongs to the GTP cyclohydrolase I family. QueF type 2 subfamily. In terms of assembly, homodimer.

It is found in the cytoplasm. The catalysed reaction is 7-aminomethyl-7-carbaguanine + 2 NADP(+) = 7-cyano-7-deazaguanine + 2 NADPH + 3 H(+). It functions in the pathway tRNA modification; tRNA-queuosine biosynthesis. Functionally, catalyzes the NADPH-dependent reduction of 7-cyano-7-deazaguanine (preQ0) to 7-aminomethyl-7-deazaguanine (preQ1). The chain is NADPH-dependent 7-cyano-7-deazaguanine reductase from Burkholderia multivorans (strain ATCC 17616 / 249).